Reading from the N-terminus, the 186-residue chain is uncharacterized protein (186 aa).

The region spanning 89 to 164 is the Cupin type-2 domain; that stretch reads LMSLGIGEDI…NTPLKLYSIY (76 aa). 117-124 contacts ATP; the sequence is GIVKMGKS.

This is an uncharacterized protein from Bacillus subtilis (strain 168).